Reading from the N-terminus, the 552-residue chain is Formate--tetrahydrofolate ligase (552 aa).

62 to 69 (TPAGEGKS) contributes to the ATP binding site.

Belongs to the formate--tetrahydrofolate ligase family.

It catalyses the reaction (6S)-5,6,7,8-tetrahydrofolate + formate + ATP = (6R)-10-formyltetrahydrofolate + ADP + phosphate. The protein operates within one-carbon metabolism; tetrahydrofolate interconversion. In Ligilactobacillus salivarius (strain UCC118) (Lactobacillus salivarius), this protein is Formate--tetrahydrofolate ligase.